The chain runs to 99 residues: MVKRTHGYRYKSRKLLSKAPRERGMSGLSRLLYEYKPGDKVVIDIDPTFISTAPHRRYQGKVGVVIGTRGRAYVIETYIGDKKKIIITTPEHLRPHLGG.

The protein belongs to the eukaryotic ribosomal protein eL21 family.

This chain is Large ribosomal subunit protein eL21, found in Pyrobaculum calidifontis (strain DSM 21063 / JCM 11548 / VA1).